We begin with the raw amino-acid sequence, 315 residues long: MEIRPLLMCFALCVVYATSKPTEKKERIHHDAPLSSREHDDAQGFDYDHDAFLGQKEAKSFDDLSPEESKRRLGVIVEKIDGDSDGFVTEVELRAWIKKAQKKYIYENVDRQWKDFDVNNDGMISWEEYRNVTYGTYLDDPEPDDGYNYQHMMARDERRFKMADQNRDQIANKEEFTAFLHPEEYDHMKDIVVLETMEDIDKNGDGFIDLNEYIGDMYNHEDEMEEPDWVATEREQFSEFRDKNKDGKMDREETMDWILPSDYDHAEAEAKHLVYESDSNKDGKLSKEEILNKYDLFVGSQATDFGEALVRHDEF.

Positions 1-19 (MEIRPLLMCFALCVVYATS) are cleaved as a signal peptide. EF-hand domains are found at residues 68 to 103 (ESKRRLGVIVEKIDGDSDGFVTEVELRAWIKKAQKK), 104 to 139 (YIYENVDRQWKDFDVNNDGMISWEEYRNVTYGTYLD), 151 to 186 (HMMARDERRFKMADQNRDQIANKEEFTAFLHPEEYD), 188 to 223 (MKDIVVLETMEDIDKNGDGFIDLNEYIGDMYNHEDE), 229 to 264 (WVATEREQFSEFRDKNKDGKMDREETMDWILPSDYD), and 265 to 300 (HAEAEAKHLVYESDSNKDGKLSKEEILNKYDLFVGS). Residues Asp81, Asp83, Asp85, Glu92, Asp117, Asn119, Asp121, Met123, and Glu128 each contribute to the Ca(2+) site. Asn131 carries an N-linked (GlcNAc...) asparagine glycan. Ca(2+)-binding residues include Asp164, Asn166, Asp168, Glu175, Asp201, Asn203, Asp205, Glu212, Asp242, Asn244, Asp246, Lys248, Glu253, Asp278, Asn280, Asp282, Lys284, and Glu289. The Prevents secretion from ER signature appears at 312-315 (HDEF).

The protein belongs to the CREC family. As to quaternary structure, interacts with ggcx.

The protein localises to the endoplasmic reticulum membrane. It localises to the golgi apparatus. It is found in the secreted. The protein resides in the melanosome. Its subcellular location is the sarcoplasmic reticulum lumen. Involved in regulation of vitamin K-dependent carboxylation of multiple N-terminal glutamate residues. Seems to inhibit gamma-carboxylase ggcx. Binds 7 calcium ions with a low affinity. This chain is Calumenin-A (calua), found in Salmo salar (Atlantic salmon).